Consider the following 132-residue polypeptide: uncharacterized protein (132 aa).

This is an uncharacterized protein from Saccharomyces cerevisiae (strain ATCC 204508 / S288c) (Baker's yeast).